The sequence spans 645 residues: Zinc finger protein 64 (645 aa).

C2H2-type zinc fingers lie at residues 175 to 197, 203 to 225, and 231 to 253; these read HKCEVCGKCFSRKDKLKTHMRCH, YKCKTCDYAAADSSSLNKHLRIH, and FKCQICPYASRNSSQLTVHLRSH. Glutamate 286 participates in a covalent cross-link: Glycyl lysine isopeptide (Lys-Gly) (interchain with G-Cter in SUMO2). Residues 299 to 324 form a C2H2-type 4; atypical zinc finger; the sequence is FNCCYPGCHFKTVHGMKDLDRHLRIH. 9 C2H2-type zinc fingers span residues 330-352, 358-380, 386-408, 414-436, 442-465, 467-489, 495-517, 523-546, and 580-602; these read HKCEFCDKCFSRKDNLTMHMRCH, HKCHLCDYAAVDSSSLKKHLRIH, YKCQLCPYASRNSSQLTVHLRSH, FQCWLCSAKFKISSDLKRHMIVH, FKCEFCDVRCTMKANLKSHIRIKH, FKCLHCAFQGRDRADLLEHSRLH, EKCPECSYSCSSAAALRVHSRVH, FKCDFCSFDTKRPSSLAKHVDKVH, and FRCETCGASFVRDDSLRCHKKQH. Asparagine 397 is covalently cross-linked (Glycyl lysine isopeptide (Lys-Gly) (interchain with G-Cter in SUMO2)). 2 stretches are compositionally biased toward basic and acidic residues: residues 543 to 554 and 600 to 610; these read DKVHRDEAKTEN and KQHSDQSENKN. 2 disordered regions span residues 543–567 and 600–645; these read DKVHRDEAKTENRAPLGKEGLREGS and KQHS…SQDL. Valine 545 is modified (phosphoserine). Positions 622–631 are enriched in polar residues; it reads ASGQLSTLVS.

It belongs to the krueppel C2H2-type zinc-finger protein family. As to quaternary structure, interacts with ZNF70; this interaction promote the transactivation of the HES1 gene. Interacts with NOTCH1.

It localises to the nucleus. In terms of biological role, may be involved in the regulation of mesenchymal cell differentiation through transactivation of NOTCH1 target genes. This chain is Zinc finger protein 64, found in Homo sapiens (Human).